We begin with the raw amino-acid sequence, 673 residues long: Putative lipase atg15 (673 aa).

Residues 1-7 (MPRKRSR) lie on the Cytoplasmic side of the membrane. The chain crosses the membrane as a helical; Signal-anchor for type II membrane protein span at residues 8–28 (FELSIHSLLLSVAVLSGAAYA). Residues 29 to 673 (SGYYPPSQQV…AVTSAPTPTS (645 aa)) are Lumenal-facing. N-linked (GlcNAc...) asparagine glycosylation is found at Asn156, Asn191, Asn213, Asn271, and Asn295. The active-site Charge relay system is the Ser311. N-linked (GlcNAc...) asparagine glycosylation occurs at Asn457.

The protein belongs to the AB hydrolase superfamily. Lipase family. As to quaternary structure, binds to both phosphatidylinositol (PI) and phosphatidylinositol 3,5-bisphosphate (PIP2).

It localises to the endosome. Its subcellular location is the multivesicular body membrane. It is found in the prevacuolar compartment membrane. The enzyme catalyses a triacylglycerol + H2O = a diacylglycerol + a fatty acid + H(+). Lipase which is essential for lysis of subvacuolar cytoplasm to vacuole targeted bodies and intravacuolar autophagic bodies. Involved in the lysis of intravacuolar multivesicular body (MVB) vesicles. The intravacuolar membrane disintegration by atg15 is critical to life span extension. The polypeptide is Putative lipase atg15 (atg15) (Penicillium rubens (strain ATCC 28089 / DSM 1075 / NRRL 1951 / Wisconsin 54-1255) (Penicillium chrysogenum)).